The chain runs to 558 residues: MAFKSDIEIAQESTMLPVAELAEKLNIAEEYVESYGKYKAKIDYNLLKEKGNTPDGKLILVTAINPTPAGEGKTTTTVGLGDALTHLGKKVVIALREPSLGPVFGVKGGAAGGGYAQVVPMEDINLHFTGDLHAIGAANNLIAALLDNHIYQGNALDIDVRRITWKRCMDMNDRQLRYINDGLGGKANGMPREDGFDITVASEIMAILCLSSDLDDLKQRVERIIVGYNRKGEPVTAGQLKAQGAVAALLKDALKPNLVQTLEHTPSFIHGGPFANIAHGCNSVMATKMALKLGDYVVTEAGFGADLGAEKFLDIKCRLSGLEPDAVVIVATVRALKSHGGVAKADLNQENLAALKEGLPNLLKHVENITVNFGLPAVVAINRFPTDTLAEVQLVEEECKKLGVNVALSEVWEKGGAGGVELAEEVLKLMDSPKNFTFAYDIDLGLKEKITAIATKIYGADGVDFIGSSTKDIEGIESIGYRNIPVCMAKTQYSLSDDQKKLGRPTGFRISIRSVKVSAGAGFAVALTGDIMTMPGLPKVPAAESIDVDNTGRISGLF.

Threonine 67 to threonine 74 contacts ATP.

This sequence belongs to the formate--tetrahydrofolate ligase family.

The catalysed reaction is (6S)-5,6,7,8-tetrahydrofolate + formate + ATP = (6R)-10-formyltetrahydrofolate + ADP + phosphate. It participates in one-carbon metabolism; tetrahydrofolate interconversion. This chain is Formate--tetrahydrofolate ligase 2, found in Desulfitobacterium hafniense (strain Y51).